The following is a 78-amino-acid chain: Large ribosomal subunit protein bL28 (78 aa).

This sequence belongs to the bacterial ribosomal protein bL28 family.

This is Large ribosomal subunit protein bL28 from Prochlorococcus marinus (strain MIT 9215).